Consider the following 102-residue polypeptide: PE family immunomodulator PE15 (102 aa).

The PE domain occupies 3–91 (LRVVPESLAG…SGASYAARDA (89 aa)).

This sequence belongs to the mycobacterial PE family.

It localises to the secreted. It is found in the cell envelope. The protein resides in the cell surface. Its function is as follows. May play a pivotal role in the evasion of host immune response by M.tuberculosis. Mediates production of IL-10 via activation of the p38 and ERK1/2 mitogen-activated protein kinase (MAPK) signaling pathways. The chain is PE family immunomodulator PE15 (PE15) from Mycobacterium tuberculosis (strain CDC 1551 / Oshkosh).